A 136-amino-acid chain; its full sequence is Large ribosomal subunit protein uL16c (136 aa).

The protein belongs to the universal ribosomal protein uL16 family. As to quaternary structure, part of the 50S ribosomal subunit.

It is found in the plastid. Its subcellular location is the chloroplast. The chain is Large ribosomal subunit protein uL16c from Buxus microphylla (Littleleaf boxwood).